We begin with the raw amino-acid sequence, 407 residues long: Protein S-acyltransferase 8 (407 aa).

2 helical membrane passes run 29–49 (SLPLTLLLIIVPVVLFCVFVA) and 62–82 (GYAIMVVAILFTIYVLILLFF). One can recognise a DHHC domain in the interval 136–186 (KYCDTCMLYRPPRCSHCSICNNCVERFDHHCPWVGQCIGLRNYRYFFMFVS). C166 (S-palmitoyl cysteine intermediate) is an active-site residue. The next 2 helical transmembrane spans lie at 181 to 201 (FFMFVSSSTLLCIYIFSMSAV) and 224 to 244 (AVVLMIYCFIALWFVGGLTAF). The tract at residues 348-368 (AEDANNNQPHHTLDIDHERAG) is disordered. The segment covering 358–368 (HTLDIDHERAG) has biased composition (basic and acidic residues). A Phosphoserine modification is found at S385.

The protein belongs to the DHHC palmitoyltransferase family. As to expression, expressed in flowers and pollen.

The protein resides in the cell membrane. The catalysed reaction is L-cysteinyl-[protein] + hexadecanoyl-CoA = S-hexadecanoyl-L-cysteinyl-[protein] + CoA. Its function is as follows. S-acyltransferase involved in protein lipid modification. The protein is Protein S-acyltransferase 8 (PAT08) of Arabidopsis thaliana (Mouse-ear cress).